We begin with the raw amino-acid sequence, 254 residues long: MIDIHCHILPAMDDGAGDSADSIEMARAAVRQGIRTIIATPHHNNGVYKNEPAAVREAADQLNKRLIKEDIPLHVLPGQEIRIYGEVEQDLAKRQLLSLNDTKYILIEFPFDHVPRYAEQLFYDLQLKGYIPVIAHPERNREIRENPSLLYHLVEKGAASQITSGSLAGIFGKQLKAFSLRLVEANLIHFVASDAHNVKTRNFHTQEALYVLEKEFGSELPYMLTENAELLLRNQTIFRQPPQPVKRRKLFGFF.

The protein belongs to the metallo-dependent hydrolases superfamily. CpsB/CapC family. The cofactor is Mn(2+).

It carries out the reaction O-phospho-L-tyrosyl-[protein] + H2O = L-tyrosyl-[protein] + phosphate. Its activity is regulated as follows. Inhibited by vanadate and sodium pyrophosphate. Not inhibited by sodium fluoride. In terms of biological role, dephosphorylates the phosphotyrosine-containing proteins YwqD, YwqF and Ssb. The protein is Tyrosine-protein phosphatase YwqE (ywqE) of Bacillus subtilis (strain 168).